We begin with the raw amino-acid sequence, 575 residues long: MAEEFSNTTHESFNFTLHTTLGVTTKLVLPTPAEPILPVQTGEQAQQEEQSSGMTIFFSLLVLAICIILVHLLIRYRLHFLPESVAVVSLGILMGAVIKVIEFKKLANWKEEEMFRPNMFFLLLLPPIIFESGYSLHKGNFFQNIGSITLFAVFGTAISAFVVGGGIYFLGQADVISKLNMTDSFAFGSLISAVDPVATIAIFNALHVDPVLNMLVFGESILNDAVSIVLTNTAEGLTRKHMSDVSGWQTFSQALGYFLKMFFGSAALGTLTGLISALVLKHIDLRKTPSLEFGMMIIFAYLPYGLAEGISLSGIMAILFSGIVMSHYTHHNLSPVTQILMQQTLRTVAFLCETCVFAFLGLSIFSFPHKFEISFVIWCIVLVLFGRAVNIFPLSYLLNFFRDHKITPKMMFIMWFSGLRGAIPYALSLHLGLEPMEKRQLIGTTTIIIVLFTILLLGGSTMPLIRLVDIEDARARRRSKKDVNLSKTEKMGNAIESEHLSELTEEEYEAHYIRQQDLKGFMWLDAKYLNPFFTRRLTQEDLHHGRIQMKSLTNKWYEEVRQGPSGSEDDEQELF.

11 helical membrane passes run 54–74, 78–98, 117–137, 150–170, 185–205, 255–275, 305–325, 348–368, 373–393, 411–431, and 445–465; these read MTIF…HLLI, LHFL…GAVI, PNMF…YSLH, LFAV…IYFL, FAFG…IFNA, LGYF…TGLI, GLAE…GIVM, VAFL…FSFP, ISFV…NIFP, MFIM…SLHL, and TTII…MPLI. Phosphothreonine is present on threonine 504. Phosphoserine occurs at positions 565 and 567.

It belongs to the monovalent cation:proton antiporter 1 (CPA1) transporter (TC 2.A.36) family. Intestine and kidneys.

It is found in the golgi apparatus membrane. The protein localises to the golgi apparatus. Its subcellular location is the trans-Golgi network membrane. It localises to the endosome. The protein resides in the multivesicular body membrane. It is found in the apical cell membrane. The protein localises to the cytoplasmic vesicle. Its subcellular location is the secretory vesicle. It localises to the acrosome. The enzyme catalyses Na(+)(in) + H(+)(out) = Na(+)(out) + H(+)(in). With respect to regulation, expression and activity are regulated by acid media by increasing the rate of trafficking to the apical membrane. Inhibited by HOE694 and S3226. In terms of biological role, na(+)/H(+) antiporter. Mediates the electoneutral exchange of intracellular H(+) ions for extracellular Na(+) in 1:1 stoichiometry. Acts as an Na(+)/H(+) exchanger in the trans-Golgi. Contributes to the regulation of pH regulation of Golgi apparatus, and consequently, in protein trafficking and endosomal morphology. In germ cells, plays a crucial role in acrosome biogenesis and sperm development, probably by playing a role in the fusion of the Golgi-derived vesicles that form the acrosomal cap. Can also be active at the cell surface of specialized cells. In the small intestine, at the cell membrane, plays a major physiological role in transepithelial absorption of Na(+) and regulates intracellular pH homeostasis of intestinal epithelial cells. Acts as an important regulator of mucosal integrity in the intestine and in the stomach, could mediate the pH fluctuation necessary for mucin exocytosis or assist membrane trafficking of other proteins. Plays a role in photoreceptor survival and in the maintenance of intracellular pH homeostasis in retinal pigment epithelium (RPE cells). The polypeptide is Sodium/hydrogen exchanger 8 (Slc9a8) (Rattus norvegicus (Rat)).